A 338-amino-acid polypeptide reads, in one-letter code: Serine/threonine-protein kinase YabT (338 aa).

The Protein kinase domain occupies 28–286 (YTLRKQLGKG…PIKASPQPAT (259 aa)). Residues 34–42 (LGKGANGIV) and K55 each bind ATP. D148 serves as the catalytic Proton acceptor. The tract at residues 266-312 (DAGQKAAQRKQPIKASPQPATRQRQQKPRQGKITKTRYTPKQKPAKS) is disordered. The segment covering 289–309 (RQQKPRQGKITKTRYTPKQKP) has biased composition (basic residues).

It belongs to the protein kinase superfamily. Ser/Thr protein kinase family. Autophosphorylated.

It carries out the reaction L-seryl-[protein] + ATP = O-phospho-L-seryl-[protein] + ADP + H(+). It catalyses the reaction L-threonyl-[protein] + ATP = O-phospho-L-threonyl-[protein] + ADP + H(+). Functionally, plays a role in the cell's commitment to sporulation; phosphorylates DNA replication initiation-control protein YabA. Deletion of this kinase delays entry into sporulation but does not affect final spore yield. Overexpression decreases biofilm formation; phosphorylation of YabA probably prevents biofilm formation. The sequence is that of Serine/threonine-protein kinase YabT (yabT) from Bacillus subtilis (strain 168).